A 101-amino-acid chain; its full sequence is Urease subunit beta (101 aa).

Belongs to the urease beta subunit family. Heterotrimer of UreA (gamma), UreB (beta) and UreC (alpha) subunits. Three heterotrimers associate to form the active enzyme.

It is found in the cytoplasm. The enzyme catalyses urea + 2 H2O + H(+) = hydrogencarbonate + 2 NH4(+). Its pathway is nitrogen metabolism; urea degradation; CO(2) and NH(3) from urea (urease route): step 1/1. In Burkholderia thailandensis (strain ATCC 700388 / DSM 13276 / CCUG 48851 / CIP 106301 / E264), this protein is Urease subunit beta.